The chain runs to 339 residues: Small ribosomal subunit biogenesis GTPase RsgA (339 aa).

Positions 111–271 (MRGLLKPVAA…LIDSPGIREF (161 aa)) constitute a CP-type G domain. GTP contacts are provided by residues 159-162 (NKAD) and 213-221 (GQSGVGKSS). Cysteine 295, cysteine 300, histidine 302, and cysteine 308 together coordinate Zn(2+).

It belongs to the TRAFAC class YlqF/YawG GTPase family. RsgA subfamily. As to quaternary structure, monomer. Associates with 30S ribosomal subunit, binds 16S rRNA. The cofactor is Zn(2+).

The protein localises to the cytoplasm. Functionally, one of several proteins that assist in the late maturation steps of the functional core of the 30S ribosomal subunit. Helps release RbfA from mature subunits. May play a role in the assembly of ribosomal proteins into the subunit. Circularly permuted GTPase that catalyzes slow GTP hydrolysis, GTPase activity is stimulated by the 30S ribosomal subunit. The polypeptide is Small ribosomal subunit biogenesis GTPase RsgA (Pseudomonas aeruginosa (strain ATCC 15692 / DSM 22644 / CIP 104116 / JCM 14847 / LMG 12228 / 1C / PRS 101 / PAO1)).